A 155-amino-acid chain; its full sequence is Microsomal glutathione S-transferase 1 (155 aa).

The Lumenal portion of the chain corresponds to Asp3–Asp9. The chain crosses the membrane as a helical span at residues Asn10–Ala33. Residues Thr34–Phe62 are Cytoplasmic-facing. Arg38 is a binding site for glutathione. Residues Lys42, Lys55, and Lys60 each carry the N6-acetyllysine modification. Residues Val63–Ser96 form a helical membrane-spanning segment. Residues Arg73, Arg74, His76, and Glu81 each coordinate glutathione. The Lumenal portion of the chain corresponds to Gly97–Asp99. Residues Leu100 to Thr123 traverse the membrane as a helical segment. Tyr121 lines the glutathione pocket. The Cytoplasmic portion of the chain corresponds to Pro124–Pro128. Residues Asn129–Leu148 traverse the membrane as a helical segment. Over Leu149 to Leu155 the chain is Lumenal.

It belongs to the MAPEG family. Homotrimer; The trimer binds only one molecule of glutathione. Post-translationally, acetylation of Lys-42 and Lys-55 is observed in liver mitochondria from fasted mice but not from fed mice. As to expression, expressed in the testes (at protein level).

It is found in the endoplasmic reticulum membrane. Its subcellular location is the mitochondrion outer membrane. It catalyses the reaction RX + glutathione = an S-substituted glutathione + a halide anion + H(+). In terms of biological role, conjugation of reduced glutathione to a wide number of exogenous and endogenous hydrophobic electrophiles. This chain is Microsomal glutathione S-transferase 1 (Mgst1), found in Mus musculus (Mouse).